The chain runs to 304 residues: Probable 5-dehydro-4-deoxyglucarate dehydratase (304 aa).

Belongs to the DapA family.

It carries out the reaction 5-dehydro-4-deoxy-D-glucarate + H(+) = 2,5-dioxopentanoate + CO2 + H2O. Its pathway is carbohydrate acid metabolism; D-glucarate degradation; 2,5-dioxopentanoate from D-glucarate: step 2/2. The polypeptide is Probable 5-dehydro-4-deoxyglucarate dehydratase (Pseudarthrobacter chlorophenolicus (strain ATCC 700700 / DSM 12829 / CIP 107037 / JCM 12360 / KCTC 9906 / NCIMB 13794 / A6) (Arthrobacter chlorophenolicus)).